The primary structure comprises 1147 residues: Nucleolar protein 8 (1147 aa).

Residues 8 to 89 (KRLFVGGLGQ…GTLQIQLAKE (82 aa)) form the RRM domain. Lys-225 participates in a covalent cross-link: Glycyl lysine isopeptide (Lys-Gly) (interchain with G-Cter in SUMO2). A phosphoserine mark is found at Ser-300 and Ser-306. Residue Lys-316 forms a Glycyl lysine isopeptide (Lys-Gly) (interchain with G-Cter in SUMO2) linkage. At Tyr-362 the chain carries Phosphotyrosine. Phosphoserine is present on residues Ser-364 and Ser-365. Thr-367 is modified (phosphothreonine). The disordered stretch occupies residues 379–401 (KVKNSAESSQPERTVSKKSSFQK). Residues 383 to 400 (SAESSQPERTVSKKSSFQ) show a composition bias toward polar residues. Phosphoserine is present on Ser-416. Disordered stretches follow at residues 427–452 (KFVN…EEYK), 472–511 (AGSH…DLYN), 592–659 (MENG…PLKA), 686–741 (KALE…EDNQ), 766–888 (ANLD…NEDE), 932–963 (KHDH…AEKL), and 986–1017 (SNTD…TLAC). Residues 441-450 (DSEESEEDEE) are compositionally biased toward acidic residues. Polar residues-rich tracts occupy residues 592–610 (MENG…TSCQ) and 629–650 (TFEN…STNP). 2 stretches are compositionally biased toward basic and acidic residues: residues 700–714 (SLEK…EDPQ) and 732–741 (AKDKQAEDNQ). Ser-704 is modified (phosphoserine). Position 777 is a phosphothreonine (Thr-777). 2 positions are modified to phosphoserine: Ser-783 and Ser-787. Residues 799-809 (CPEKELMKESV) are compositionally biased toward basic and acidic residues. 5 positions are modified to phosphoserine: Ser-819, Ser-820, Ser-825, Ser-827, and Ser-872. Residues 857–883 (SDERFRMDSRFLESDSEDEKKELNEDK) are compositionally biased toward basic and acidic residues. Coiled-coil stretches lie at residues 868-898 (LESD…KTLN) and 937-963 (IYER…AEKL). The segment covering 994–1011 (DVPRTEAGAREGTGKIRN) has biased composition (basic and acidic residues). Lys-1038 participates in a covalent cross-link: Glycyl lysine isopeptide (Lys-Gly) (interchain with G-Cter in SUMO2). The tract at residues 1055–1086 (PNDPRFQDSSSEEEDIAEEADHSKPSPGEAVP) is disordered. A phosphoserine mark is found at Ser-1063, Ser-1064, Ser-1065, and Ser-1080.

As to quaternary structure, interacts with the GTP form of RRAGA, RRAGC and RRAGD. Interacts with NIP7. Interacts with DDX18; the interaction is RNA-dependent. Interacts with DDX47; the interaction is RNA-dependent. In terms of processing, phosphorylated.

The protein localises to the nucleus. Its subcellular location is the nucleolus. Its function is as follows. Plays an essential role in the survival of diffuse-type gastric cancer cells. Acts as a nucleolar anchoring protein for DDX47. May be involved in regulation of gene expression at the post-transcriptional level or in ribosome biogenesis in cancer cells. The polypeptide is Nucleolar protein 8 (Mus musculus (Mouse)).